Here is a 117-residue protein sequence, read N- to C-terminus: Large ribosomal subunit protein bL20c (117 aa).

Belongs to the bacterial ribosomal protein bL20 family.

The protein localises to the plastid. It localises to the chloroplast. Functionally, binds directly to 23S ribosomal RNA and is necessary for the in vitro assembly process of the 50S ribosomal subunit. It is not involved in the protein synthesizing functions of that subunit. In Vitis vinifera (Grape), this protein is Large ribosomal subunit protein bL20c.